The chain runs to 658 residues: Exoribonuclease 2 (658 aa).

The RNB domain maps to 189 to 531 (REDLTALHFI…NHRLIKAVLT (343 aa)). Positions 576-658 (KPTFQAEIQD…ETRSIVGTLC (83 aa)) constitute an S1 motif domain.

Belongs to the RNR ribonuclease family. RNase II subfamily.

The protein localises to the cytoplasm. It carries out the reaction Exonucleolytic cleavage in the 3'- to 5'-direction to yield nucleoside 5'-phosphates.. Its function is as follows. Involved in mRNA degradation. Hydrolyzes single-stranded polyribonucleotides processively in the 3' to 5' direction. The polypeptide is Exoribonuclease 2 (Pasteurella multocida (strain Pm70)).